The primary structure comprises 195 residues: HTH-type transcriptional regulator BetI (195 aa).

One can recognise an HTH tetR-type domain in the interval 8–68 (PIRRRQLIDA…ATMRDITSQL (61 aa)). The H-T-H motif DNA-binding region spans 31 to 50 (TIAQIARRAGVSTGIISHYF).

The protein operates within amine and polyamine biosynthesis; betaine biosynthesis via choline pathway [regulation]. Functionally, repressor involved in the biosynthesis of the osmoprotectant glycine betaine. It represses transcription of the choline transporter BetT and the genes of BetAB involved in the synthesis of glycine betaine. This chain is HTH-type transcriptional regulator BetI, found in Klebsiella pneumoniae (strain 342).